A 475-amino-acid chain; its full sequence is 3-hydroxyadipyl-CoA dehydrogenase (475 aa).

Belongs to the 3-hydroxyacyl-CoA dehydrogenase family. Homotrimer.

It carries out the reaction (3S)-3-hydroxyadipyl-CoA + NAD(+) = 3-oxoadipyl-CoA + NADH + H(+). Its pathway is aromatic compound metabolism; phenylacetate degradation. Catalyzes the oxidation of 3-hydroxyadipyl-CoA to yield 3-oxoadipyl-CoA. This is 3-hydroxyadipyl-CoA dehydrogenase (paaH) from Escherichia coli (strain K12).